The following is a 290-amino-acid chain: Arylamine N-acetyltransferase 1 (290 aa).

Residue Met1 is modified to N-acetylmethionine. Cys68 (acyl-thioester intermediate) is an active-site residue. Ser103 is a binding site for CoA. 106-107 (VH) contacts substrate. Catalysis depends on residues His107 and Asp122. Residue Tyr208 participates in CoA binding.

This sequence belongs to the arylamine N-acetyltransferase family.

Its subcellular location is the cytoplasm. The catalysed reaction is an arylamine + acetyl-CoA = an N-acetylarylamine + CoA. Participates in the detoxification of a plethora of hydrazine and arylamine drugs. Acetylates both arylamines and arylalkylamines. In Rattus norvegicus (Rat), this protein is Arylamine N-acetyltransferase 1 (Nat1).